A 400-amino-acid polypeptide reads, in one-letter code: 3-phenylpropionate/cinnamic acid dioxygenase ferredoxin--NAD(+) reductase component (400 aa).

5-36 lines the FAD pocket; that stretch reads TIIIVGGGQAAAMAAASLRQQGFTGELHLFSD. 146-174 contributes to the NAD(+) binding site; sequence SVVIVGAGTIGLELAASATQRRCKVTVIE.

Belongs to the bacterial ring-hydroxylating dioxygenase ferredoxin reductase family. As to quaternary structure, this dioxygenase system consists of four proteins: the two subunits of the hydroxylase component (HcaE and HcaF), a ferredoxin (HcaC) and a ferredoxin reductase (HcaD). The cofactor is FAD.

The enzyme catalyses 2 reduced [2Fe-2S]-[ferredoxin] + NAD(+) + H(+) = 2 oxidized [2Fe-2S]-[ferredoxin] + NADH. The protein operates within aromatic compound metabolism; 3-phenylpropanoate degradation. Functionally, part of the multicomponent 3-phenylpropionate dioxygenase, that converts 3-phenylpropionic acid (PP) and cinnamic acid (CI) into 3-phenylpropionate-dihydrodiol (PP-dihydrodiol) and cinnamic acid-dihydrodiol (CI-dihydrodiol), respectively. In Shigella sonnei (strain Ss046), this protein is 3-phenylpropionate/cinnamic acid dioxygenase ferredoxin--NAD(+) reductase component.